The chain runs to 488 residues: MADVRKLKNYINGEWVESRADKYEDVINPATGEVLCQVPISTRAELDQAAVIAEQAFEKWSQVAVPRRARVLFSFQQLLIQHKEELARLITLENGKNLSEARGEVQRGIENVEFAAGAPTLMMGDSLASIATDVEAANYRYPVGVVGGIAPFNFPMMVPCWMFPMAIALGNSFILKPSERTPLLMEKLVELFSEAGLPKGVFNVVYGAHDVVNGILENEIIKAVSFVGSKPVGEYVYKTGSANLKRVQALTGAKNHTIVLNDADLEDTVTNVISAAFGSAGERCMACAVVTVEEGIADEFLAALRTAAQNVKIGNGLDDGVFLGPVIREENQKRTIAYIEKGLEEGAKLTVDGRETGLSEGHFVGPTILEDVTTDMTIWKDEIFAPVLSVIRVKNLQEAVRVANQSEFANGACIFTNNAKAIRYFREKIDAGMLGVNLGVPAPMAFFPFSGWKSSFYGTLHANGKDSVDFYTHKKVVTARYSLKGYEE.

The NAD(+) site is built by alanine 150, phenylalanine 152, lysine 176, glutamate 179, arginine 180, serine 229, and threonine 251. Cysteine 284 acts as the Nucleophile in catalysis. NAD(+) is bound at residue glutamate 382.

This sequence belongs to the aldehyde dehydrogenase family. IolA subfamily. Homotetramer.

It carries out the reaction 3-oxopropanoate + NAD(+) + CoA + H2O = hydrogencarbonate + acetyl-CoA + NADH + H(+). It catalyses the reaction 2-methyl-3-oxopropanoate + NAD(+) + CoA + H2O = propanoyl-CoA + hydrogencarbonate + NADH + H(+). It participates in polyol metabolism; myo-inositol degradation into acetyl-CoA; acetyl-CoA from myo-inositol: step 7/7. Functionally, catalyzes the oxidation of malonate semialdehyde (MSA) and methylmalonate semialdehyde (MMSA) into acetyl-CoA and propanoyl-CoA, respectively. Is involved in a myo-inositol catabolic pathway. Bicarbonate, and not CO2, is the end-product of the enzymatic reaction. The chain is Malonate-semialdehyde dehydrogenase from Listeria monocytogenes serotype 4b (strain CLIP80459).